We begin with the raw amino-acid sequence, 310 residues long: Malate dehydrogenase (310 aa).

NAD(+) is bound by residues Gly-7–Gly-12 and Asp-32. 2 residues coordinate substrate: Arg-81 and Arg-87. NAD(+) is bound by residues Asn-94 and Val-117–Asn-119. Substrate-binding residues include Asn-119 and Arg-150. The active-site Proton acceptor is the His-174.

The protein belongs to the LDH/MDH superfamily. MDH type 3 family.

It catalyses the reaction (S)-malate + NAD(+) = oxaloacetate + NADH + H(+). Functionally, catalyzes the reversible oxidation of malate to oxaloacetate. The protein is Malate dehydrogenase of Pelodictyon phaeoclathratiforme (strain DSM 5477 / BU-1).